The primary structure comprises 455 residues: tRNA modification GTPase MnmE (455 aa).

(6S)-5-formyl-5,6,7,8-tetrahydrofolate contacts are provided by Arg22, Glu85, and Arg124. The 158-residue stretch at 220–377 folds into the TrmE-type G domain; the sequence is GIYTVIVGRP…VEKAIKEAIL (158 aa). Asn230 is a K(+) binding site. GTP-binding positions include 230 to 235, 249 to 255, and 274 to 277; these read NVGKSS, TDIPGTT, and DTAG. Ser234 is a Mg(2+) binding site. K(+) contacts are provided by Thr249, Ile251, and Thr254. Thr255 is a binding site for Mg(2+). Position 455 (Lys455) interacts with (6S)-5-formyl-5,6,7,8-tetrahydrofolate.

The protein belongs to the TRAFAC class TrmE-Era-EngA-EngB-Septin-like GTPase superfamily. TrmE GTPase family. Homodimer. Heterotetramer of two MnmE and two MnmG subunits. It depends on K(+) as a cofactor.

The protein resides in the cytoplasm. Its function is as follows. Exhibits a very high intrinsic GTPase hydrolysis rate. Involved in the addition of a carboxymethylaminomethyl (cmnm) group at the wobble position (U34) of certain tRNAs, forming tRNA-cmnm(5)s(2)U34. The sequence is that of tRNA modification GTPase MnmE from Caldicellulosiruptor saccharolyticus (strain ATCC 43494 / DSM 8903 / Tp8T 6331).